Here is a 76-residue protein sequence, read N- to C-terminus: Vasotab (76 aa).

Positions 1–20 (MKFALFSVLVVLLIATFVAA) are cleaved as a signal peptide. A Kazal-like domain is found at 21-76 (DECPRICTADYRPVCGTPSGGRRSANRTFGNQCSLNAHNCLNKGDTYDKLHDGECK). Disulfide bonds link Cys-23–Cys-60, Cys-27–Cys-53, and Cys-35–Cys-75.

As to expression, expressed by the salivary gland.

It localises to the secreted. Its function is as follows. Vasodilator protein that inhibits vasoconstriction of isolated rat femoral artery induced by phenylephrine. Since platelet aggregation and vasoconstriction are key hemostatic responses, particularly in small wounds, this protein likely participates in the antihemostatic responses during blood feeding. Blocks L-type calcium channels (Cav1/CACNA1) in left ventricular myocytes isolated from rat hearts. The polypeptide is Vasotab (Hybomitra bimaculata (Horse fly)).